A 54-amino-acid chain; its full sequence is Light-harvesting protein B-800/850 alpha chain (54 aa).

The Cytoplasmic segment spans residues methionine 1–valine 14. The chain crosses the membrane as a helical span at residues glycine 15–leucine 35. Residue histidine 31 coordinates a bacteriochlorophyll. At threonine 36–glutamate 54 the chain is on the periplasmic side.

Belongs to the antenna complex alpha subunit family. In terms of assembly, the core complex is formed by different alpha and beta chains, binding bacteriochlorophyll molecules, and arranged most probably in tetrameric structures disposed around the reaction center. The non-pigmented gamma chains may constitute additional components.

Its subcellular location is the cell inner membrane. Antenna complexes are light-harvesting systems, which transfer the excitation energy to the reaction centers. This chain is Light-harvesting protein B-800/850 alpha chain (pucA), found in Cereibacter sphaeroides (Rhodobacter sphaeroides).